Consider the following 1150-residue polypeptide: ATP-dependent helicase/deoxyribonuclease subunit B (1150 aa).

8 to 15 provides a ligand contact to ATP; that stretch reads GRAGSGKS. [4Fe-4S] cluster-binding residues include Cys786, Cys1106, Cys1109, and Cys1115.

It belongs to the helicase family. AddB/RexB type 1 subfamily. As to quaternary structure, heterodimer of AddA and AddB. The cofactor is Mg(2+). Requires [4Fe-4S] cluster as cofactor.

In terms of biological role, the heterodimer acts as both an ATP-dependent DNA helicase and an ATP-dependent, dual-direction single-stranded exonuclease. Recognizes the chi site generating a DNA molecule suitable for the initiation of homologous recombination. The AddB subunit has 5' -&gt; 3' nuclease activity but not helicase activity. The protein is ATP-dependent helicase/deoxyribonuclease subunit B of Clostridium botulinum (strain Hall / ATCC 3502 / NCTC 13319 / Type A).